The primary structure comprises 376 residues: tRNA (guanine(26)-N(2))-dimethyltransferase (376 aa).

The Trm1 methyltransferase domain occupies 4 to 373 (VAVKEGLARI…APFGVVAEVM (370 aa)). R36, R61, D78, D120, and A121 together coordinate S-adenosyl-L-methionine.

Belongs to the class I-like SAM-binding methyltransferase superfamily. Trm1 family.

It carries out the reaction guanosine(26) in tRNA + 2 S-adenosyl-L-methionine = N(2)-dimethylguanosine(26) in tRNA + 2 S-adenosyl-L-homocysteine + 2 H(+). Functionally, dimethylates a single guanine residue at position 26 of a number of tRNAs using S-adenosyl-L-methionine as donor of the methyl groups. This chain is tRNA (guanine(26)-N(2))-dimethyltransferase, found in Thermococcus kodakarensis (strain ATCC BAA-918 / JCM 12380 / KOD1) (Pyrococcus kodakaraensis (strain KOD1)).